We begin with the raw amino-acid sequence, 276 residues long: Small ribosomal subunit protein uS3 (276 aa).

In terms of domain architecture, KH type-2 spans 38 to 106; sequence IRRMMTKGME…QVQLNILEVK (69 aa). The segment covering 216–228 has biased composition (low complexity); it reads NAAARAGNRPARG. The segment at 216-276 is disordered; sequence NAAARAGNRP…PAAESTGTEA (61 aa). Residues 229-245 show a composition bias toward basic and acidic residues; sequence GADRPAGRGGRGGERGG. Residues 254 to 269 are compositionally biased toward low complexity; the sequence is PAAEAPKADAAAAPAA.

The protein belongs to the universal ribosomal protein uS3 family. Part of the 30S ribosomal subunit. Forms a tight complex with proteins S10 and S14.

Its function is as follows. Binds the lower part of the 30S subunit head. Binds mRNA in the 70S ribosome, positioning it for translation. The protein is Small ribosomal subunit protein uS3 of Streptomyces griseus subsp. griseus (strain JCM 4626 / CBS 651.72 / NBRC 13350 / KCC S-0626 / ISP 5235).